A 269-amino-acid chain; its full sequence is 3-methyl-2-oxobutanoate hydroxymethyltransferase (269 aa).

Mg(2+) is bound by residues Asp43 and Asp82. Residues 43-44, Asp82, and Lys110 contribute to the 3-methyl-2-oxobutanoate site; that span reads DS. Glu112 is a binding site for Mg(2+). Residue Glu179 is the Proton acceptor of the active site.

This sequence belongs to the PanB family. In terms of assembly, homodecamer; pentamer of dimers. The cofactor is Mg(2+).

The protein resides in the cytoplasm. It catalyses the reaction 3-methyl-2-oxobutanoate + (6R)-5,10-methylene-5,6,7,8-tetrahydrofolate + H2O = 2-dehydropantoate + (6S)-5,6,7,8-tetrahydrofolate. It functions in the pathway cofactor biosynthesis; (R)-pantothenate biosynthesis; (R)-pantoate from 3-methyl-2-oxobutanoate: step 1/2. In terms of biological role, catalyzes the reversible reaction in which hydroxymethyl group from 5,10-methylenetetrahydrofolate is transferred onto alpha-ketoisovalerate to form ketopantoate. The protein is 3-methyl-2-oxobutanoate hydroxymethyltransferase of Acinetobacter baumannii (strain AB307-0294).